Consider the following 95-residue polypeptide: uncharacterized protein (95 aa).

2 repeat units span residues 67-74 (GCGCGCGC) and 85-92 (CGGCCGCG). Residues 67-92 (GCGCGCGCATVAAVSPVPCGGCCGCG) form a 2 X 8 AA approximate repeats region.

This is an uncharacterized protein from Caenorhabditis elegans.